Consider the following 124-residue polypeptide: Small ribosomal subunit protein uS12 (124 aa).

Positions 1-24 are disordered; that stretch reads MPTINQLVRRPRKPSVSANKAPAL. D90 is modified (3-methylthioaspartic acid).

Belongs to the universal ribosomal protein uS12 family. Part of the 30S ribosomal subunit. Contacts proteins S8 and S17. May interact with IF1 in the 30S initiation complex.

In terms of biological role, with S4 and S5 plays an important role in translational accuracy. Its function is as follows. Interacts with and stabilizes bases of the 16S rRNA that are involved in tRNA selection in the A site and with the mRNA backbone. Located at the interface of the 30S and 50S subunits, it traverses the body of the 30S subunit contacting proteins on the other side and probably holding the rRNA structure together. The combined cluster of proteins S8, S12 and S17 appears to hold together the shoulder and platform of the 30S subunit. This is Small ribosomal subunit protein uS12 from Anaplasma phagocytophilum (strain HZ).